Consider the following 181-residue polypeptide: BURP domain-containing protein 7 (181 aa).

The first 21 residues, 1 to 21, serve as a signal peptide directing secretion; the sequence is MARSLAALLLLLVAAAGDSHA. Residues 65-181 enclose the BURP domain; the sequence is FFLEKDLFPG…RRGRRTGWRP (117 aa). Positions 112 to 181 are disordered; it reads QLSVPAGSPA…RRGRRTGWRP (70 aa). Basic residues predominate over residues 128 to 143; the sequence is RPRRSPARRSNARRRS. Residues 144–157 show a composition bias toward low complexity; the sequence is SPWWSSPRPASAPA. Residues 170-181 show a composition bias toward basic residues; sequence GRRRGRRTGWRP.

In terms of tissue distribution, expressed in roots, stems, leaves and shoot.

The chain is BURP domain-containing protein 7 (BURP7) from Oryza sativa subsp. japonica (Rice).